A 335-amino-acid polypeptide reads, in one-letter code: 2-acylglycerol O-acyltransferase 1 (335 aa).

Helical transmembrane passes span 18–38 (TVAV…SIGI) and 40–60 (VMLI…WLYF). Residues Asn-121 and Asn-125 are each glycosylated (N-linked (GlcNAc...) asparagine). Residues 132-152 (LFPGFTSYLHVLPLWFWCPVF) form a helical membrane-spanning segment. Asn-180 carries an N-linked (GlcNAc...) asparagine glycan.

Belongs to the diacylglycerol acyltransferase family. In terms of tissue distribution, expressed in stomach and liver.

The protein resides in the endoplasmic reticulum membrane. The catalysed reaction is a 2-acylglycerol + an acyl-CoA = a 1,2-diacylglycerol + CoA. It catalyses the reaction 2-(9Z-octadecenoyl)-glycerol + butanoyl-CoA = 1-butanoyl-2-(9Z-octadecenoyl)-glycerol + CoA. The enzyme catalyses 2-(9Z-octadecenoyl)-glycerol + octanoyl-CoA = 1-octanoyl-2-(9Z-octadecenoyl)-glycerol + CoA. It carries out the reaction 2-(9Z-octadecenoyl)-glycerol + dodecanoyl-CoA = 1-dodecanoyl-2-(9Z-octadecenoyl)-glycerol + CoA. The catalysed reaction is 2-(9Z-octadecenoyl)-glycerol + tetradecanoyl-CoA = 1-tetradecanoyl-2-(9Z-octadecenoyl)-glycerol + CoA. It catalyses the reaction 2-(9Z-octadecenoyl)-glycerol + hexadecanoyl-CoA = 1-hexadecanoyl-2-(9Z-octadecenoyl)-glycerol + CoA. The enzyme catalyses 2-(9Z-octadecenoyl)-glycerol + octadecanoyl-CoA = 1-octadecanoyl-2-(9Z-octadecenoyl)-glycerol + CoA. It carries out the reaction eicosanoyl-CoA + 2-(9Z-octadecenoyl)-glycerol = 1-eicosanoyl-2-(9Z-octadecenoyl)-glycerol + CoA. The catalysed reaction is 2-(9Z-octadecenoyl)-glycerol + (9Z)-octadecenoyl-CoA = 1,2-di-(9Z-octadecenoyl)-glycerol + CoA. It catalyses the reaction 2-(9Z-octadecenoyl)-glycerol + (9Z,12Z)-octadecadienoyl-CoA = 1-(9Z,12Z-octadecadienoyl)-2-(9Z-octadecenoyl)-glycerol + CoA. The enzyme catalyses 2-(9Z-octadecenoyl)-glycerol + (5Z,8Z,11Z,14Z)-eicosatetraenoyl-CoA = 1-(5Z,8Z,11Z,14Z-eicosatetraenoyl)-2-(9Z-octadecenoyl)-glycerol + CoA. It carries out the reaction a 2-acylglycerol + an acyl-CoA = a 1,2-diacyl-sn-glycerol + CoA. The catalysed reaction is a 2-acylglycerol + an acyl-CoA = a 2,3-diacyl-sn-glycerol + CoA. It catalyses the reaction a 1-acylglycerol + an acyl-CoA = a 1,2-diacylglycerol + CoA. The enzyme catalyses 1-dodecanoylglycerol + (9Z)-octadecenoyl-CoA = 1-dodecanoyl-2-(9Z-octadecenoyl)-glycerol + CoA. It carries out the reaction 1-tetradecanoylglycerol + (9Z)-octadecenoyl-CoA = 1-tetradecanoyl-2-(9Z-octadecenoyl)-glycerol + CoA. The catalysed reaction is 1-hexadecanoylglycerol + (9Z)-octadecenoyl-CoA = 1-hexadecanoyl-2-(9Z-octadecenoyl)-glycerol + CoA. It catalyses the reaction 1-(9Z-octadecenoyl)-glycerol + (9Z)-octadecenoyl-CoA = 1,2-di-(9Z-octadecenoyl)-glycerol + CoA. The enzyme catalyses 1-(9Z,12Z-octadecadienoyl)-glycerol + (9Z)-octadecenoyl-CoA = 1-(9Z,12Z-octadecadienoyl)-2-(9Z-octadecenoyl)-glycerol + CoA. It carries out the reaction 1-(9Z,12Z,15Z-octadecatrienoyl)-glycerol + (9Z)-octadecenoyl-CoA = 1-(9Z,12Z,15Z-octadecatrienoyl)-2-(9Z-octadecenoyl)-glycerol + CoA. The catalysed reaction is 1-(5Z,8Z,11Z,14Z-eicosatetraenoyl)-glycerol + (9Z)-octadecenoyl-CoA = 1-(5Z,8Z,11Z,14Z-eicosatetraenoyl)-2-(9Z-octadecenoyl)-glycerol + CoA. It catalyses the reaction a 1-acylglycerol + an acyl-CoA = a 1,3-diacylglycerol + CoA. The enzyme catalyses 1-dodecanoylglycerol + (9Z)-octadecenoyl-CoA = 1-dodecanoyl-3-(9Z-octadecenoyl)-glycerol + CoA. It carries out the reaction 1-hexadecanoylglycerol + (9Z)-octadecenoyl-CoA = 1-(9Z-octadecenoyl)-3-hexadecanoylglycerol + CoA. The catalysed reaction is 1-octadecanoylglycerol + (9Z)-octadecenoyl-CoA = 1-octadecanoyl-3-(9Z-octadecenoyl)-glycerol + CoA. It catalyses the reaction 1-(9Z-octadecenoyl)-sn-glycerol + (9Z)-octadecenoyl-CoA = 1,3-di-(9Z-octadecenoyl)-glycerol + CoA. The enzyme catalyses 1-(9Z,12Z-octadecadienoyl)-glycerol + (9Z)-octadecenoyl-CoA = 1-(9Z-octadecenoyl)-3-(9Z,12Z-octadecadienoyl)-glycerol + CoA. It carries out the reaction 1-(9Z,12Z,15Z-octadecatrienoyl)-glycerol + (9Z)-octadecenoyl-CoA = 1-(9Z,12Z,15Z-octadecatrienoyl)-3-(9Z-octadecenoyl)-glycerol + CoA. The catalysed reaction is a 1-acyl-sn-glycerol + an acyl-CoA = a 1,3-diacyl-sn-glycerol + CoA. It catalyses the reaction a 3-acyl-sn-glycerol + an acyl-CoA = a 1,3-diacyl-sn-glycerol + CoA. The enzyme catalyses 3-octadecanoyl-sn-glycerol + (9Z)-octadecenoyl-CoA = 1-(9Z-octadecenoyl)-3-octadecanoyl-sn-glycerol + CoA. It participates in glycerolipid metabolism; triacylglycerol biosynthesis. In terms of biological role, involved in glycerolipid synthesis and lipid metabolism. Catalyzes the formation of diacylglycerol, the precursor of triacylglycerol, by transferring the acyl chain of a fatty acyl-CoA to a monoacylglycerol, mainly at the sn-1 or sn-3 positions. It uses both sn-2-monoacylglycerol (2-acylglycerol) and sn-1-monoacylglycerol (1-acyl-sn-glycerol) equally well as substrates, and uses sn-3-monoacylglycerol (3-acyl-sn-glycerol) with lower efficiency. Probably not involved in absorption of dietary fat in the small intestine. The polypeptide is 2-acylglycerol O-acyltransferase 1 (Homo sapiens (Human)).